Consider the following 71-residue polypeptide: Small ribosomal subunit protein bS21 (71 aa).

It belongs to the bacterial ribosomal protein bS21 family.

In Buchnera aphidicola subsp. Baizongia pistaciae (strain Bp), this protein is Small ribosomal subunit protein bS21.